A 911-amino-acid chain; its full sequence is Transferrin-binding protein A (911 aa).

The signal sequence occupies residues 1 to 24 (MQQQHLFRLNILCLSLMTALPAYA). A TonB box motif is present at residues 38 to 45 (DTIQVKAK). The TBDR plug domain maps to 51 to 176 (RDNEVTGLGK…LAGSVAFQTK (126 aa)). The TBDR beta-barrel domain maps to 187–911 (QWGIQSKTAY…NYTFSLEMKF (725 aa)). Residues 894-911 (NRYAAPGRNYTFSLEMKF) carry the TonB C-terminal box motif.

This sequence belongs to the TonB-dependent receptor family. In terms of assembly, binds both human apo- and holo-transferrin (TF), via the TF C-terminus. Forms a large complex with TF and TbpB.

The protein localises to the cell outer membrane. Functionally, neisseria acquires iron by extracting it from serum transferrin (TF) in its human host. Acts as a TF receptor and is required for TF utilization. Binds both apo- and holo-TF, via the TF C-terminus. The protein is Transferrin-binding protein A of Neisseria meningitidis serogroup B.